The primary structure comprises 292 residues: Homoserine kinase (292 aa).

84–94 (PLSRGLGSSSA) serves as a coordination point for ATP.

This sequence belongs to the GHMP kinase family. Homoserine kinase subfamily.

It is found in the cytoplasm. The enzyme catalyses L-homoserine + ATP = O-phospho-L-homoserine + ADP + H(+). It functions in the pathway amino-acid biosynthesis; L-threonine biosynthesis; L-threonine from L-aspartate: step 4/5. Functionally, catalyzes the ATP-dependent phosphorylation of L-homoserine to L-homoserine phosphate. The sequence is that of Homoserine kinase from Campylobacter jejuni subsp. doylei (strain ATCC BAA-1458 / RM4099 / 269.97).